The sequence spans 223 residues: von Willebrand factor C domain-containing protein 2-like (223 aa).

The signal sequence occupies residues 1–21 (MGPFLPAICVVLLALNAAVSP). VWFC domains follow at residues 51–110 (KGCV…PECK) and 114–172 (NFCE…PICK).

The protein localises to the secreted. The protein resides in the synapse. Its function is as follows. May play a role in bone differentiation and matrix mineralization. May play a role in neural development. The sequence is that of von Willebrand factor C domain-containing protein 2-like (vwc2l) from Danio rerio (Zebrafish).